The chain runs to 200 residues: NAD(P)H dehydrogenase (quinone) (200 aa).

Residues 4–190 enclose the Flavodoxin-like domain; sequence VLVLYYSTYG…EGARFQGRHV (187 aa). FMN contacts are provided by residues 10–15 and 78–80; these read STYGHV and TRY. Y12 is a binding site for NAD(+). W98 is a substrate binding site. FMN-binding positions include 113-119 and H134; that span reads STASQHG.

It belongs to the WrbA family. FMN is required as a cofactor.

It carries out the reaction a quinone + NADH + H(+) = a quinol + NAD(+). The catalysed reaction is a quinone + NADPH + H(+) = a quinol + NADP(+). The polypeptide is NAD(P)H dehydrogenase (quinone) (Methylobacterium radiotolerans (strain ATCC 27329 / DSM 1819 / JCM 2831 / NBRC 15690 / NCIMB 10815 / 0-1)).